The chain runs to 251 residues: MNLGIIGYGNIGELLSQNIISHDFCNLNKLYIANRTLSKINHLKDIDPRISITDDNIEVAKTCEKIIISVKTPDLAIVLDPLKPHITKNQQIIHTCAGTDLEFKDCGLSCVIPTISSTYDEDNPKKGVSIIMHDENVSGENREFVEKLFSKFSQIKVVDSPMDLEIATIAASCMPAFIALGVDLFAGELEEKCNLSKEETFKILAETLNSTAYILKEDIYSPDELINKVATKNGITQKGLDVLDKRPARYL.

Belongs to the pyrroline-5-carboxylate reductase family.

Its subcellular location is the cytoplasm. It catalyses the reaction L-proline + NADP(+) = (S)-1-pyrroline-5-carboxylate + NADPH + 2 H(+). The enzyme catalyses L-proline + NAD(+) = (S)-1-pyrroline-5-carboxylate + NADH + 2 H(+). Its pathway is amino-acid biosynthesis; L-proline biosynthesis; L-proline from L-glutamate 5-semialdehyde: step 1/1. Catalyzes the reduction of 1-pyrroline-5-carboxylate (PCA) to L-proline. This chain is Pyrroline-5-carboxylate reductase (proC), found in Methanobrevibacter smithii.